Here is a 676-residue protein sequence, read N- to C-terminus: DNA ligase (676 aa).

NAD(+) contacts are provided by residues 42–46 (DDVYD), 91–92 (SL), and Glu-121. Lys-123 serves as the catalytic N6-AMP-lysine intermediate. The NAD(+) site is built by Arg-144, Glu-178, Lys-294, and Lys-318. Cys-412, Cys-415, Cys-430, and Cys-435 together coordinate Zn(2+). Positions 596–676 (NSTSEFTGKR…QLQAAMDETK (81 aa)) constitute a BRCT domain.

Belongs to the NAD-dependent DNA ligase family. LigA subfamily. Mg(2+) is required as a cofactor. The cofactor is Mn(2+).

The enzyme catalyses NAD(+) + (deoxyribonucleotide)n-3'-hydroxyl + 5'-phospho-(deoxyribonucleotide)m = (deoxyribonucleotide)n+m + AMP + beta-nicotinamide D-nucleotide.. In terms of biological role, DNA ligase that catalyzes the formation of phosphodiester linkages between 5'-phosphoryl and 3'-hydroxyl groups in double-stranded DNA using NAD as a coenzyme and as the energy source for the reaction. It is essential for DNA replication and repair of damaged DNA. The chain is DNA ligase from Levilactobacillus brevis (strain ATCC 367 / BCRC 12310 / CIP 105137 / JCM 1170 / LMG 11437 / NCIMB 947 / NCTC 947) (Lactobacillus brevis).